We begin with the raw amino-acid sequence, 415 residues long: Gamma-glutamyl phosphate reductase (415 aa).

It belongs to the gamma-glutamyl phosphate reductase family.

It localises to the cytoplasm. It carries out the reaction L-glutamate 5-semialdehyde + phosphate + NADP(+) = L-glutamyl 5-phosphate + NADPH + H(+). The protein operates within amino-acid biosynthesis; L-proline biosynthesis; L-glutamate 5-semialdehyde from L-glutamate: step 2/2. In terms of biological role, catalyzes the NADPH-dependent reduction of L-glutamate 5-phosphate into L-glutamate 5-semialdehyde and phosphate. The product spontaneously undergoes cyclization to form 1-pyrroline-5-carboxylate. This Salmonella dublin (strain CT_02021853) protein is Gamma-glutamyl phosphate reductase.